Reading from the N-terminus, the 331-residue chain is Tetraacyldisaccharide 4'-kinase (331 aa).

ATP is bound at residue threonine 58 to threonine 65.

This sequence belongs to the LpxK family.

It catalyses the reaction a lipid A disaccharide + ATP = a lipid IVA + ADP + H(+). Its pathway is glycolipid biosynthesis; lipid IV(A) biosynthesis; lipid IV(A) from (3R)-3-hydroxytetradecanoyl-[acyl-carrier-protein] and UDP-N-acetyl-alpha-D-glucosamine: step 6/6. In terms of biological role, transfers the gamma-phosphate of ATP to the 4'-position of a tetraacyldisaccharide 1-phosphate intermediate (termed DS-1-P) to form tetraacyldisaccharide 1,4'-bis-phosphate (lipid IVA). In Shewanella denitrificans (strain OS217 / ATCC BAA-1090 / DSM 15013), this protein is Tetraacyldisaccharide 4'-kinase.